Reading from the N-terminus, the 171-residue chain is Small ribosomal subunit protein uS5 (171 aa).

In terms of domain architecture, S5 DRBM spans 13 to 76 (FLERLVAVNR…DQAKKNLVTI (64 aa)).

Belongs to the universal ribosomal protein uS5 family. In terms of assembly, part of the 30S ribosomal subunit. Contacts proteins S4 and S8.

With S4 and S12 plays an important role in translational accuracy. Its function is as follows. Located at the back of the 30S subunit body where it stabilizes the conformation of the head with respect to the body. The polypeptide is Small ribosomal subunit protein uS5 (Dichelobacter nodosus (strain VCS1703A)).